Here is a 132-residue protein sequence, read N- to C-terminus: Small ribosomal subunit protein uS8 (132 aa).

The protein belongs to the universal ribosomal protein uS8 family. Part of the 30S ribosomal subunit. Contacts proteins S5 and S12.

Its function is as follows. One of the primary rRNA binding proteins, it binds directly to 16S rRNA central domain where it helps coordinate assembly of the platform of the 30S subunit. This is Small ribosomal subunit protein uS8 from Corynebacterium glutamicum (strain R).